A 148-amino-acid chain; its full sequence is 1,4-dihydroxy-2-naphthoyl-CoA hydrolase (148 aa).

The active site involves aspartate 15.

It belongs to the 4-hydroxybenzoyl-CoA thioesterase family. DHNA-CoA hydrolase subfamily.

The catalysed reaction is 1,4-dihydroxy-2-naphthoyl-CoA + H2O = 1,4-dihydroxy-2-naphthoate + CoA + H(+). The protein operates within cofactor biosynthesis; phylloquinone biosynthesis. It functions in the pathway quinol/quinone metabolism; 1,4-dihydroxy-2-naphthoate biosynthesis; 1,4-dihydroxy-2-naphthoate from chorismate: step 7/7. Its function is as follows. Catalyzes the hydrolysis of 1,4-dihydroxy-2-naphthoyl-CoA (DHNA-CoA) to 1,4-dihydroxy-2-naphthoate (DHNA), a reaction involved in phylloquinone (vitamin K1) biosynthesis. The protein is 1,4-dihydroxy-2-naphthoyl-CoA hydrolase of Nostoc punctiforme (strain ATCC 29133 / PCC 73102).